The sequence spans 376 residues: GTPase Obg (376 aa).

Residues 2-161 enclose the Obg domain; it reads ASFVDEVLIR…RVVHVELRIV (160 aa). The 167-residue stretch at 162–328 folds into the OBG-type G domain; it reads ADVGFVGLPN…LQEAFVRLSD (167 aa). Residues 168 to 175, 193 to 197, 215 to 218, 282 to 285, and 309 to 311 contribute to the GTP site; these read GLPNAGKS, FTTRI, DVPG, TKLD, and SVH. The Mg(2+) site is built by Ser-175 and Thr-195.

Belongs to the TRAFAC class OBG-HflX-like GTPase superfamily. OBG GTPase family. Monomer. It depends on Mg(2+) as a cofactor.

It localises to the cytoplasm. Functionally, an essential GTPase which binds GTP, GDP and possibly (p)ppGpp with moderate affinity, with high nucleotide exchange rates and a fairly low GTP hydrolysis rate. Plays a role in control of the cell cycle, stress response, ribosome biogenesis and in those bacteria that undergo differentiation, in morphogenesis control. This is GTPase Obg from Treponema pallidum (strain Nichols).